We begin with the raw amino-acid sequence, 491 residues long: Probable glycine dehydrogenase (decarboxylating) subunit 2 (491 aa).

Position 264 is an N6-(pyridoxal phosphate)lysine (Lys264).

Belongs to the GcvP family. C-terminal subunit subfamily. The glycine cleavage system is composed of four proteins: P, T, L and H. In this organism, the P 'protein' is a heterodimer of two subunits. Pyridoxal 5'-phosphate serves as cofactor.

The enzyme catalyses N(6)-[(R)-lipoyl]-L-lysyl-[glycine-cleavage complex H protein] + glycine + H(+) = N(6)-[(R)-S(8)-aminomethyldihydrolipoyl]-L-lysyl-[glycine-cleavage complex H protein] + CO2. Functionally, the glycine cleavage system catalyzes the degradation of glycine. The P protein binds the alpha-amino group of glycine through its pyridoxal phosphate cofactor; CO(2) is released and the remaining methylamine moiety is then transferred to the lipoamide cofactor of the H protein. The polypeptide is Probable glycine dehydrogenase (decarboxylating) subunit 2 (Coxiella burnetii (strain CbuG_Q212) (Coxiella burnetii (strain Q212))).